The sequence spans 701 residues: Elongation factor G (701 aa).

Residues 8-286 enclose the tr-type G domain; it reads ERIRNIGIIA…AVVYYLPSPV (279 aa). Residues 17-24, 85-89, and 139-142 each bind GTP; these read AHIDAGKT, DTPGH, and NKMD.

The protein belongs to the TRAFAC class translation factor GTPase superfamily. Classic translation factor GTPase family. EF-G/EF-2 subfamily.

It localises to the cytoplasm. Its function is as follows. Catalyzes the GTP-dependent ribosomal translocation step during translation elongation. During this step, the ribosome changes from the pre-translocational (PRE) to the post-translocational (POST) state as the newly formed A-site-bound peptidyl-tRNA and P-site-bound deacylated tRNA move to the P and E sites, respectively. Catalyzes the coordinated movement of the two tRNA molecules, the mRNA and conformational changes in the ribosome. This Roseiflexus castenholzii (strain DSM 13941 / HLO8) protein is Elongation factor G.